We begin with the raw amino-acid sequence, 133 residues long: Small ribosomal subunit protein uS8 (133 aa).

The protein belongs to the universal ribosomal protein uS8 family. In terms of assembly, part of the 30S ribosomal subunit. Contacts proteins S5 and S12.

Functionally, one of the primary rRNA binding proteins, it binds directly to 16S rRNA central domain where it helps coordinate assembly of the platform of the 30S subunit. In Microcystis aeruginosa (strain NIES-843 / IAM M-2473), this protein is Small ribosomal subunit protein uS8.